A 395-amino-acid chain; its full sequence is Multidrug resistance protein MdtL (395 aa).

12 consecutive transmembrane segments (helical) span residues 4–24 (FLLC…MYLV), 42–62 (IAFS…GKIA), 69–89 (PVAI…SRAS), 93–113 (LFLS…VVAF), 131–151 (LLNG…HLIM), 158–178 (SLFY…LFIL), 217–237 (VSVI…VMGF), 247–267 (ALTA…LGLF), 271–291 (TLML…SLAH), 295–315 (VTLF…GVAM), 328–350 (VASS…LAAI), and 355–377 (AMNM…IFSV).

It belongs to the major facilitator superfamily. DHA1 family. MdtL (TC 2.A.1.2.22) subfamily.

Its subcellular location is the cell inner membrane. This chain is Multidrug resistance protein MdtL, found in Salmonella newport (strain SL254).